The sequence spans 684 residues: Methionine--tRNA ligase (684 aa).

Positions 17–27 (PYANGKAHVGH) match the 'HIGH' region motif. Zn(2+)-binding residues include C148, C151, C160, and C164. A 'KMSKS' region motif is present at residues 330–334 (TFSKS). Residue K333 coordinates ATP. In terms of domain architecture, tRNA-binding spans 582–684 (DFSKLDIRIG…KETNPGTCIH (103 aa)).

This sequence belongs to the class-I aminoacyl-tRNA synthetase family. MetG type 1 subfamily. Homodimer. Requires Zn(2+) as cofactor.

It is found in the cytoplasm. It catalyses the reaction tRNA(Met) + L-methionine + ATP = L-methionyl-tRNA(Met) + AMP + diphosphate. In terms of biological role, is required not only for elongation of protein synthesis but also for the initiation of all mRNA translation through initiator tRNA(fMet) aminoacylation. The polypeptide is Methionine--tRNA ligase (Methanococcoides burtonii (strain DSM 6242 / NBRC 107633 / OCM 468 / ACE-M)).